Reading from the N-terminus, the 192-residue chain is Der GTPase-activating protein YihI (192 aa).

Residues 1–80 form a disordered region; it reads MSRTKKTRRI…KAAVKEVKDP (80 aa). Basic and acidic residues-rich tracts occupy residues 9-25, 37-48, and 65-80; these read RITDIMPARKADKKPEQ, TRYELDAKAREE, and DPAEQKKAAVKEVKDP.

The protein belongs to the YihI family. Interacts with Der.

Functionally, a GTPase-activating protein (GAP) that modifies Der/EngA GTPase function. May play a role in ribosome biogenesis. The sequence is that of Der GTPase-activating protein YihI from Actinobacillus pleuropneumoniae serotype 5b (strain L20).